Here is a 495-residue protein sequence, read N- to C-terminus: Calcium-dependent protein kinase 11 (495 aa).

Residues 26–284 (YLLGKKLGQG…AHEALCHPWI (259 aa)) form the Protein kinase domain. ATP-binding positions include 32–40 (LGQGQFGTT) and lysine 55. Catalysis depends on aspartate 150, which acts as the Proton acceptor. The residue at position 190 (serine 190) is a Phosphoserine. The tract at residues 290–320 (APDKPLDPAVLSRLKQFSQMNKIKKMALRVI) is autoinhibitory domain. EF-hand domains are found at residues 327–362 (EEIG…VGSE), 363–398 (LMES…MNKM), 399–434 (EREE…FGLC), and 438–468 (LDDM…GDGV). Ca(2+) contacts are provided by aspartate 340, aspartate 342, serine 344, threonine 346, glutamate 351, aspartate 376, aspartate 378, serine 380, threonine 382, glutamate 387, aspartate 412, aspartate 414, serine 416, tyrosine 418, glutamate 423, aspartate 446, aspartate 448, aspartate 450, lysine 452, and glutamate 457.

This sequence belongs to the protein kinase superfamily. Ser/Thr protein kinase family. CDPK subfamily. Interacts with Di19.

Its subcellular location is the cytoplasm. It localises to the nucleus. It catalyses the reaction L-seryl-[protein] + ATP = O-phospho-L-seryl-[protein] + ADP + H(+). It carries out the reaction L-threonyl-[protein] + ATP = O-phospho-L-threonyl-[protein] + ADP + H(+). Its activity is regulated as follows. Activated by calcium. Autophosphorylation may play an important role in the regulation of the kinase activity. May play a role in signal transduction pathways that involve calcium as a second messenger. Functions as a regulator of the calcium-mediated abscisic acid (ABA) signaling pathway. Phosphorylates ABA-responsive transcription factors ABF1 and ABF4 in vitro. The sequence is that of Calcium-dependent protein kinase 11 (CPK11) from Arabidopsis thaliana (Mouse-ear cress).